A 248-amino-acid chain; its full sequence is Molybdate/tungstate transport system permease protein WtpB (248 aa).

Topologically, residues 1-9 (MGGRDYTLY) are cytoplasmic. The chain crosses the membrane as a helical span at residues 10–30 (LFAALGSFLIVYIALPIIVIF). Residues 31-56 (TKQALDFRMLVKTIHDPLVIEALRNS) lie on the Extracellular side of the membrane. Residues 53-239 (LRNSLLTATA…GISLGIFVVL (187 aa)) form the ABC transmembrane type-1 domain. The helical transmembrane segment at 57–77 (LLTATATALISLLFGVPLGYV) threads the bilayer. The Cytoplasmic segment spans residues 78–91 (LARKDFRGKSLVQA). A helical membrane pass occupies residues 92 to 112 (IIDVPIVIPHSVVGIMLLVTF). At 113-115 (SNA) the chain is on the extracellular side. The helical transmembrane segment at 116–136 (ILDSYKGIIAAMLFVSAPFAI) threads the bilayer. Over 137–164 (NSARDGFLAVDEKLEHVARTLGASKLRT) the chain is Cytoplasmic. The chain crosses the membrane as a helical span at residues 165 to 185 (FFSISLPIALPSIASGAIMAW). The Extracellular portion of the chain corresponds to 186 to 223 (ARGISEVGAILIVAYYPKTAQVLVMEYFNNYGLRASRP). Residues 224–244 (ISVILMGISLGIFVVLRWLIG) form a helical membrane-spanning segment. Topologically, residues 245 to 248 (KAKS) are cytoplasmic.

Belongs to the binding-protein-dependent transport system permease family. In terms of assembly, the complex is composed of two ATP-binding proteins (WtpC), two transmembrane proteins (WtpB) and a solute-binding protein (WtpA).

Its subcellular location is the cell membrane. In terms of biological role, part of the ABC transporter complex WtpABC involved in molybdate/tungstate import. Probably responsible for the translocation of the substrate across the membrane. The sequence is that of Molybdate/tungstate transport system permease protein WtpB (wtpB) from Pyrococcus abyssi (strain GE5 / Orsay).